The sequence spans 330 residues: Phosphatidylglycerol--prolipoprotein diacylglyceryl transferase (330 aa).

Transmembrane regions (helical) follow at residues 22-42 (LPIRAYALLIILGIVAALVVG), 57-77 (YDIALWAVPFGLVGGRLYHLA), and 97-117 (IWDGGLGIWGAVALGCVGAWL). Arginine 145 serves as a coordination point for a 1,2-diacyl-sn-glycero-3-phospho-(1'-sn-glycerol). Helical transmembrane passes span 193-213 (VVQPTFLYELIWNVLVFFALI) and 257-277 (INSFTSTFVFIGAVVYIILAP).

Belongs to the Lgt family.

It localises to the cell membrane. It catalyses the reaction L-cysteinyl-[prolipoprotein] + a 1,2-diacyl-sn-glycero-3-phospho-(1'-sn-glycerol) = an S-1,2-diacyl-sn-glyceryl-L-cysteinyl-[prolipoprotein] + sn-glycerol 1-phosphate + H(+). It participates in protein modification; lipoprotein biosynthesis (diacylglyceryl transfer). In terms of biological role, catalyzes the transfer of the diacylglyceryl group from phosphatidylglycerol to the sulfhydryl group of the N-terminal cysteine of a prolipoprotein, the first step in the formation of mature lipoproteins. This chain is Phosphatidylglycerol--prolipoprotein diacylglyceryl transferase, found in Mycobacterium leprae (strain Br4923).